The sequence spans 417 residues: Phosphoribosylamine--glycine ligase (417 aa).

The 207-residue stretch at Lys107–Glu313 folds into the ATP-grasp domain. An ATP-binding site is contributed by Leu133–Ser194. Glu283 and Asn285 together coordinate Mg(2+).

It belongs to the GARS family. Mg(2+) serves as cofactor. Mn(2+) is required as a cofactor.

It carries out the reaction 5-phospho-beta-D-ribosylamine + glycine + ATP = N(1)-(5-phospho-beta-D-ribosyl)glycinamide + ADP + phosphate + H(+). The protein operates within purine metabolism; IMP biosynthesis via de novo pathway; N(1)-(5-phospho-D-ribosyl)glycinamide from 5-phospho-alpha-D-ribose 1-diphosphate: step 2/2. In Caldanaerobacter subterraneus subsp. tengcongensis (strain DSM 15242 / JCM 11007 / NBRC 100824 / MB4) (Thermoanaerobacter tengcongensis), this protein is Phosphoribosylamine--glycine ligase.